The primary structure comprises 527 residues: Bromodomain-containing protein 9 (527 aa).

Positions 1 to 16 (MNVSVTKRRKKKKKKK) are enriched in basic residues. The disordered stretch occupies residues 1–54 (MNVSVTKRRKKKKKKKSEKEKDKYLDEDERRRRKEEKKRKREKEQCDSEGETEV). The segment covering 17–30 (SEKEKDKYLDEDER) has biased composition (basic and acidic residues). Residues 31 to 41 (RRRKEEKKRKR) show a composition bias toward basic residues. Residues 78–182 (NESTPLQQLL…HTGFKMMSKA (105 aa)) enclose the Bromo domain. Residues 156 to 158 (TYN) are histone H4K5ac H4K8ac and histone H4K5bu H4K8bu binding. A compositionally biased stretch (basic and acidic residues) spans 468-478 (DFHDVHNDRGG). The tract at residues 468–527 (DFHDVHNDRGGSRPSSSSSMSNNSERDHHLGSPSRISVGEQQDIHDPYEFLQSPETDNQN) is disordered. A compositionally biased stretch (low complexity) spans 479–490 (SRPSSSSSMSNN).

Binds acetylated histones H3 and H4. Binds butyrylated histone H4.

The protein resides in the nucleus. In terms of biological role, plays a role in chromatin remodeling and regulation of transcription. Acts as a chromatin reader that recognizes and binds acylated histones: binds histones that are acetylated and/or butyrylated. This Xenopus laevis (African clawed frog) protein is Bromodomain-containing protein 9 (brd9).